The following is an 870-amino-acid chain: DNA mismatch repair protein MutS (870 aa).

616–623 lines the ATP pocket; it reads GPNMAGKS.

Belongs to the DNA mismatch repair MutS family.

Its function is as follows. This protein is involved in the repair of mismatches in DNA. It is possible that it carries out the mismatch recognition step. This protein has a weak ATPase activity. The protein is DNA mismatch repair protein MutS of Parabacteroides distasonis (strain ATCC 8503 / DSM 20701 / CIP 104284 / JCM 5825 / NCTC 11152).